Consider the following 564-residue polypeptide: Urocanate hydratase (564 aa).

Residues 54-55 (GG), Gln-132, 178-180 (GMG), Glu-198, Arg-203, 244-245 (NA), 269-273 (QTSAH), 279-280 (YL), and Tyr-328 contribute to the NAD(+) site. Residue Cys-416 is part of the active site. Residue Gly-498 coordinates NAD(+).

Belongs to the urocanase family. As to quaternary structure, homodimer. It depends on NAD(+) as a cofactor.

The enzyme catalyses 4-imidazolone-5-propanoate = trans-urocanate + H2O. The protein operates within amino-acid degradation; L-histidine degradation into L-glutamate; N-formimidoyl-L-glutamate from L-histidine: step 2/3. The polypeptide is Urocanate hydratase (Trifolium repens (Creeping white clover)).